The following is a 272-amino-acid chain: R-spondin-3 (272 aa).

The first 21 residues, 1–21 (MHLRLISWLFIILNFMEYIGS), serve as a signal peptide directing secretion. FU repeat units follow at residues 35 to 86 (PNVS…GYYG) and 92 to 135 (INKC…GLEA). An N-linked (GlcNAc...) asparagine glycan is attached at Asn36. Disulfide bonds link Cys41–Cys48, Cys45–Cys54, Cys57–Cys76, Cys80–Cys95, Cys98–Cys105, Cys102–Cys111, Cys114–Cys125, Cys129–Cys142, Cys148–Cys190, Cys159–Cys166, and Cys199–Cys206. Positions 147 to 207 (HCEVSEWNPW…KCTVQRKKCQ (61 aa)) constitute a TSP type-1 domain. Positions 201–272 (VQRKKCQKGE…QKSVSVSTVH (72 aa)) are disordered. Residues 213 to 223 (KKGRERKRKKP) show a composition bias toward basic residues. Residues 224–252 (NKGESKEAIPDSKSLESSKEIPEQRENKQ) show a composition bias toward basic and acidic residues.

Belongs to the R-spondin family. Interacts with the extracellular domain of FZD8 and LRP6. It however does not form a ternary complex with FZD8 and LRP6. Interacts with WNT1. Binds heparin. Interacts with LGR4, LGR5 and LGR6. In terms of tissue distribution, ubiquitously expressed. Expressed at higher level in placenta, small intestine, fetal thymus and lymph node. Highly expressed in endothelial cells.

The protein localises to the secreted. Functionally, activator of the canonical Wnt signaling pathway by acting as a ligand for LGR4-6 receptors, which acts as a key regulator of angiogenesis. Upon binding to LGR4-6 (LGR4, LGR5 or LGR6), LGR4-6 associate with phosphorylated LRP6 and frizzled receptors that are activated by extracellular Wnt receptors, triggering the canonical Wnt signaling pathway to increase expression of target genes. Also regulates the canonical Wnt/beta-catenin-dependent pathway and non-canonical Wnt signaling by acting as an inhibitor of ZNRF3, an important regulator of the Wnt signaling pathway. Acts as a ligand for frizzled FZD8 and LRP6. May negatively regulate the TGF-beta pathway. Acts as a key regulator of angiogenesis by controlling vascular stability and pruning: acts by activating the non-canonical Wnt signaling pathway in endothelial cells. Can also amplify Wnt signaling pathway independently of LGR4-6 receptors, possibly by acting as a direct antagonistic ligand to RNF43 and ZNRF3. The protein is R-spondin-3 (RSPO3) of Homo sapiens (Human).